Here is a 184-residue protein sequence, read N- to C-terminus: uncharacterized protein (184 aa).

The first 23 residues, 1-23, serve as a signal peptide directing secretion; it reads MFCLLHLCFYLANFASSIKRTHA.

It is found in the secreted. This is an uncharacterized protein from Homo sapiens (Human).